A 187-amino-acid polypeptide reads, in one-letter code: Sodium/potassium ATPase inhibitor SPAI-2 (187 aa).

Positions 1-21 are cleaved as a signal peptide; sequence MRSRSFLVLVAVFLICETLVA. Residue Gln22 is modified to Pyrrolidone carboxylic acid. The propeptide occupies 22 to 126; that stretch reads QRLDRIRGPK…NAQLPDKVQD (105 aa). The tract at residues 28–98 is disordered; it reads RGPKGQGQDP…QDPVKAELPD (71 aa). A run of 14 repeats spans residues 34-39, 40-45, 46-51, 58-63, 64-69, 70-75, 76-81, 82-87, 88-93, 100-105, 106-111, 112-117, 118-123, and 124-129. The tract at residues 34 to 129 is 14 X 6 AA approximate tandem repeats; it reads GQDPVEGQDQ…LPDKVQDPVK (96 aa). An SVP-1 clotting 1 repeat occupies 64–85; the sequence is GQDPVKGQDPVKGQDPVKGQDL. A WAP domain is found at 139-187; the sequence is LLSKRGHCPRILFRCPLSNPSNKCWRDYDCPGVKKCCEGFCGKDCLYPK. Cystine bridges form between Cys146/Cys175, Cys153/Cys179, Cys162/Cys174, and Cys168/Cys183.

The short form (AA 127-187) may be an artifact due to the strongly acidic conditions of the duodenum. The pro-SPAI form may be the native form. As to expression, small intestine &gt; large intestine. The plasma contains the pro-SPAI form circulating.

Inhibits Na(+),K(+) ATPase by the competitive mode against Na(+). The polypeptide is Sodium/potassium ATPase inhibitor SPAI-2 (Sus scrofa (Pig)).